The chain runs to 376 residues: Putative type I restriction enzyme MpnIIP endonuclease subunit N-terminal part (376 aa).

In terms of biological role, the N-terminal section of a putative type I restriction enzyme that if reconstituted might recognize 5'-GAN(7)TAY-3' and cleave a random distance away. Subunit R is required for both nuclease and ATPase activities, but not for modification. The protein is Putative type I restriction enzyme MpnIIP endonuclease subunit N-terminal part of Mycoplasma pneumoniae (strain ATCC 29342 / M129 / Subtype 1) (Mycoplasmoides pneumoniae).